A 206-amino-acid polypeptide reads, in one-letter code: Na(+)-translocating NADH-quinone reductase subunit E (206 aa).

6 consecutive transmembrane segments (helical) span residues 12–32 (AVFV…FIAI), 36–56 (IQTA…TVPV), 85–105 (FLGL…LEMT), 118–138 (GIFL…LFMV), 148–168 (VVYG…LAGI), and 184–204 (LGIT…FSGV).

Belongs to the NqrDE/RnfAE family. Composed of six subunits; NqrA, NqrB, NqrC, NqrD, NqrE and NqrF.

It localises to the cell inner membrane. The catalysed reaction is a ubiquinone + n Na(+)(in) + NADH + H(+) = a ubiquinol + n Na(+)(out) + NAD(+). Functionally, NQR complex catalyzes the reduction of ubiquinone-1 to ubiquinol by two successive reactions, coupled with the transport of Na(+) ions from the cytoplasm to the periplasm. NqrA to NqrE are probably involved in the second step, the conversion of ubisemiquinone to ubiquinol. This Alcanivorax borkumensis (strain ATCC 700651 / DSM 11573 / NCIMB 13689 / SK2) protein is Na(+)-translocating NADH-quinone reductase subunit E.